Reading from the N-terminus, the 514-residue chain is MDYSDDDMIDNESGEENNSDGGGNESYNYNAAVDTIILSEKSYVIIKEEEILKLQRDDIERVSTILFLSQVEAIVLLLHYHWCVSKLEDEWFTDEERIRKTVGILKEPVVDVNGTEVDIQCGICFESYTRKEIASVSCGHPYCKTCWTGYITTKIEDGPGCLRVKCPEPSCYAVVGQDMIDEVTEKKDKDKYYRYFLRSYVEDGKKMKWCPSPGCECAVEFGESSGYDVACLCSYRFCWNCSEDAHSPVDCETVSKWIFKNQDESENKNWILANSKPCPKCKRPIEKSHGCNHMTCSASCGHRFCWICGKSYSDHYACNNYVEDADHDKRTLLQSEIKRYTHYYVRWVENQSSRLKAMSDLEKFQSVQLKQLSDNQCKPKIDLQFIVDAWLQIIECRRVLKWTYAYGYYLDNLAKRPLFEYLQGEAETGLERLHHCAENELKQFFIKSEDPSDTFNAFRMKLTGLTKVTKTYFDNLVKALENGLADVTKSSEESADFLETQKLYDAYISEGCFF.

Residues 1–18 (MDYSDDDMIDNESGEENN) are compositionally biased toward acidic residues. The interval 1-26 (MDYSDDDMIDNESGEENNSDGGGNES) is disordered. The interval 117-322 (VDIQCGICFE…SDHYACNNYV (206 aa)) is TRIAD supradomain. 18 residues coordinate Zn(2+): C121, C124, C138, H140, C143, C146, C166, C171, C210, C215, C231, C233, C238, C241, H246, C251, C278, and C281. The segment at 121-171 (CGICFESYTRKEIASVSCGHPYCKTCWTGYITTKIEDGPGCLRVKCPEPSC) adopts an RING-type 1 zinc-finger fold. Residues 190–251 (DKYYRYFLRS…SEDAHSPVDC (62 aa)) form an IBR-type zinc finger. An RING-type 2; atypical zinc finger spans residues 278-308 (CPKCKRPIEKSHGCNHMTCSASCGHRFCWIC). The active site involves C291. Zn(2+)-binding residues include C296, C300, C305, C308, H315, and C318.

The protein belongs to the RBR family. Ariadne subfamily. It depends on Zn(2+) as a cofactor.

It catalyses the reaction [E2 ubiquitin-conjugating enzyme]-S-ubiquitinyl-L-cysteine + [acceptor protein]-L-lysine = [E2 ubiquitin-conjugating enzyme]-L-cysteine + [acceptor protein]-N(6)-ubiquitinyl-L-lysine.. It participates in protein modification; protein ubiquitination. Might act as an E3 ubiquitin-protein ligase, or as part of E3 complex, which accepts ubiquitin from specific E2 ubiquitin-conjugating enzymes and then transfers it to substrates. This Arabidopsis thaliana (Mouse-ear cress) protein is Probable E3 ubiquitin-protein ligase ARI10 (ARI10).